We begin with the raw amino-acid sequence, 475 residues long: Equilibrative nucleoside transporter 3 (475 aa).

At 1–51 (MAFASEDNVYHSSNAVYRAPSNHQEADQEALLGKLLDYPAPGLQRPEDRFN) the chain is on the cytoplasmic side. A Phosphoserine modification is found at Ser-21. Positions 31-32 (LL) match the Dileucine internalization motif motif. A helical membrane pass occupies residues 52-72 (GAYIIFFCLGIGGLLPWNFFV). The Extracellular segment spans residues 73 to 105 (TAKEYWAYKLRNCSSPASGEDPEDMDILNYFES). Asn-84 carries N-linked (GlcNAc...) asparagine glycosylation. Residues 106 to 126 (YLAVASTVPSLLFLVANFLLV) traverse the membrane as a helical segment. Residues 127–134 (NRVQVHVR) are Cytoplasmic-facing. Residues 135-155 (VLASLSVSLAIFVVMIVLVKV) form a helical membrane-spanning segment. Over 156 to 162 (DTSSWTR) the chain is Extracellular. The chain crosses the membrane as a helical span at residues 163–183 (GFFSLTIACMAIISSSSTIFN). Topologically, residues 184-199 (SSVYGLTGSFPMRNAQ) are cytoplasmic. Residues 200-220 (ALISGGAMGGTVSAVALLVDL) traverse the membrane as a helical segment. Residues 221–230 (AASSDVRDST) lie on the Extracellular side of the membrane. Residues 231 to 251 (LAFFLMAAVFLGLCMGLYLLL) traverse the membrane as a helical segment. At 252–305 (SQLEYARYYMRPVAPVRVFSGEDNPSQDAPSASSVAPASRVMHTPPLGPILKKT) the chain is on the cytoplasmic side. A helical membrane pass occupies residues 306-326 (ASLGFCAVSLYFVTAFIIPAI). Residues 327 to 340 (STNIQSMHKGTGSP) lie on the Extracellular side of the membrane. The chain crosses the membrane as a helical span at residues 341 to 361 (WTSKFFVPLTVFLLFNFADLC). Topologically, residues 362–377 (GRQVTAWIQVPGPRSK) are cytoplasmic. The helical transmembrane segment at 378–398 (LLPGLVVSRFCLVPLFLLCNY) threads the bilayer. Topologically, residues 399–415 (QPRSHLTKVLFQSDIYP) are extracellular. A helical membrane pass occupies residues 416 to 436 (VLFTCLLGLSNGYLSTLVLIY). Over 437–450 (GPKIVPRELAEATS) the chain is Cytoplasmic. The helical transmembrane segment at 451-471 (VVMLFYMSVGLMLGSACAALL) threads the bilayer. Topologically, residues 472 to 475 (EHFI) are extracellular.

The protein belongs to the SLC29A/ENT transporter (TC 2.A.57) family. Expressed in macrophages.

The protein localises to the lysosome membrane. Its subcellular location is the late endosome membrane. It is found in the mitochondrion membrane. The protein resides in the cell membrane. The catalysed reaction is adenosine(in) = adenosine(out). The enzyme catalyses guanosine(in) = guanosine(out). It carries out the reaction inosine(in) = inosine(out). It catalyses the reaction uridine(out) = uridine(in). The catalysed reaction is cytidine(in) = cytidine(out). The enzyme catalyses thymidine(in) = thymidine(out). It carries out the reaction 2'-deoxyadenosine(in) = 2'-deoxyadenosine(out). It catalyses the reaction 2'-deoxycytidine(in) = 2'-deoxycytidine(out). The catalysed reaction is guanine(out) = guanine(in). The enzyme catalyses uracil(in) = uracil(out). It carries out the reaction (R)-noradrenaline(out) = (R)-noradrenaline(in). It catalyses the reaction dopamine(out) = dopamine(in). The catalysed reaction is serotonin(out) = serotonin(in). The enzyme catalyses tyramine(in) = tyramine(out). It carries out the reaction ATP(in) = ATP(out). Its function is as follows. Uniporter that mediates the facilitative transport of nucleoside across lysosomal and mitochondrial membranes. Functions as a non-electrogenic Na(+)-independent transporter. Substrate transport is pH-dependent and enhanced under acidic condition, probably reflecting the location of the transporter in acidic intracellular compartments. Proton is not a cotransporting ion but most likely change the ionization state of the transporter which dictates transport-permissible/impermissible conformation for nucleoside translocation. May direct the nucleoside transport from lysosomes to cytosol or cytosol to mitochondria to facilitate the fundamental function of salvage synthesis of nucleic acids. Involved in the transport of nucleosides (adenosine, guanosine, uridine, thymidine, cytidine and inosine) and deoxynucleosides (deoxyadenosine, deoxycytidine). Also mediates transport of purine nucleobases (adenine, guanine), and pyrimidine nucleobases (uracil). Also able to transport monoamine neurotransmitters dopamine, serotonin, noradrenaline and tyramine. Capable of transporting ATP. Mediates nucleoside export from lysosomes in macrophages, which regulates macrophage functions and numbers. This is Equilibrative nucleoside transporter 3 from Mus musculus (Mouse).